The following is a 1451-amino-acid chain: ABC transporter G family member 32 (1451 aa).

Residues 162 to 435 form the ABC transporter 1 domain; sequence GNALHISPTR…FELMGFRCPQ (274 aa). 195 to 202 provides a ligand contact to ATP; sequence GPPGSGKT. The region spanning 513–725 is the ABC transmembrane type-2 1 domain; that stretch reads ALLKANIDRE…AQNAISTNEF (213 aa). 6 consecutive transmembrane segments (helical) span residues 531-551, 563-583, 618-638, 650-670, 674-694, and 760-780; these read FVYIFKAANLTLTAFLVMTTF, GTIYMGALYFALDTIMFNGFA, IPVTFFEVGVYVFTTYYVVGF, LLLVALNQMSSSLFRFIAGIG, VVSQTFGPLSLLAFTALGGFI, and IGFGALIGYTLLFNLLYTVAL. The disordered stretch occupies residues 809-835; it reads ILDSCEEKKSRKKEQSQSVNQKHWNNT. Positions 813–823 are enriched in basic and acidic residues; sequence CEEKKSRKKEQ. In terms of domain architecture, ABC transporter 2 spans 853–1105; it reads LSFNDIKYSV…KLIEYFEGIE (253 aa). 898–905 contacts ATP; sequence GVSGAGKT. The region spanning 1178 to 1392 is the ABC transmembrane type-2 2 domain; the sequence is TQCIACLWKH…TLYGLVASQF (215 aa). Transmembrane regions (helical) follow at residues 1197-1217, 1237-1257, 1285-1305, 1312-1332, 1342-1362, 1373-1393, and 1423-1443; these read YTAVRLLFTIIIALLFGTMFW, YAAVLYIGIQNSGCVQPVVVV, LPYILVQTLVYGVLVYSMIGF, FIWYLFFMYFTLLYFTFFGMM, IAAIISPAIYNAWNLFSGYLI, WYCWICPVAWTLYGLVASQFG, and LVAVVHVVFTVMFAFLFSFAI.

The protein belongs to the ABC transporter superfamily. ABCG family. PDR (TC 3.A.1.205) subfamily.

It localises to the membrane. In terms of biological role, may be a general defense protein. The chain is ABC transporter G family member 32 from Oryza sativa subsp. japonica (Rice).